The chain runs to 185 residues: Ribosomal RNA small subunit methyltransferase G (185 aa).

Residues Gly59, Phe64, 110–111 (IQ), and Arg127 contribute to the S-adenosyl-L-methionine site.

It belongs to the methyltransferase superfamily. RNA methyltransferase RsmG family.

Its subcellular location is the cytoplasm. The enzyme catalyses guanosine(527) in 16S rRNA + S-adenosyl-L-methionine = N(7)-methylguanosine(527) in 16S rRNA + S-adenosyl-L-homocysteine. Specifically methylates the N7 position of guanine in position 527 of 16S rRNA. The protein is Ribosomal RNA small subunit methyltransferase G of Helicobacter hepaticus (strain ATCC 51449 / 3B1).